The sequence spans 448 residues: Phosphoglucosamine mutase (448 aa).

Serine 104 (phosphoserine intermediate) is an active-site residue. Residues serine 104, aspartate 241, aspartate 243, and aspartate 245 each contribute to the Mg(2+) site. Serine 104 bears the Phosphoserine mark.

Belongs to the phosphohexose mutase family. Requires Mg(2+) as cofactor. Post-translationally, activated by phosphorylation.

The enzyme catalyses alpha-D-glucosamine 1-phosphate = D-glucosamine 6-phosphate. Its function is as follows. Catalyzes the conversion of glucosamine-6-phosphate to glucosamine-1-phosphate. This chain is Phosphoglucosamine mutase, found in Nocardioides sp. (strain ATCC BAA-499 / JS614).